Consider the following 252-residue polypeptide: Phosphoglycolate phosphatase (252 aa).

Catalysis depends on aspartate 13, which acts as the Nucleophile. Mg(2+) contacts are provided by aspartate 13, aspartate 15, and aspartate 192.

The protein belongs to the HAD-like hydrolase superfamily. CbbY/CbbZ/Gph/YieH family. In terms of assembly, monomer. The cofactor is Mg(2+). Chloride is required as a cofactor.

The catalysed reaction is 2-phosphoglycolate + H2O = glycolate + phosphate. It participates in organic acid metabolism; glycolate biosynthesis; glycolate from 2-phosphoglycolate: step 1/1. In terms of biological role, specifically catalyzes the dephosphorylation of 2-phosphoglycolate. Is involved in the dissimilation of the intracellular 2-phosphoglycolate formed during the DNA repair of 3'-phosphoglycolate ends, a major class of DNA lesions induced by oxidative stress. The sequence is that of Phosphoglycolate phosphatase from Salmonella paratyphi A (strain ATCC 9150 / SARB42).